Consider the following 700-residue polypeptide: Polyribonucleotide nucleotidyltransferase (700 aa).

Mg(2+)-binding residues include Asp-491 and Asp-497. A KH domain is found at 558–617 (PNYAVIEINPDKIRDVIGKGGATIRQLTEETGAVIDIDDAGTIRIFGENKAATKAAIAKI). One can recognise an S1 motif domain in the interval 627–695 (GKTYEGTVAR…NRGRIKLTMK (69 aa)).

The protein belongs to the polyribonucleotide nucleotidyltransferase family. In terms of assembly, component of the RNA degradosome, which is a multiprotein complex involved in RNA processing and mRNA degradation. Mg(2+) serves as cofactor.

It localises to the cytoplasm. It carries out the reaction RNA(n+1) + phosphate = RNA(n) + a ribonucleoside 5'-diphosphate. Functionally, involved in mRNA degradation. Catalyzes the phosphorolysis of single-stranded polyribonucleotides processively in the 3'- to 5'-direction. This Psychrobacter cryohalolentis (strain ATCC BAA-1226 / DSM 17306 / VKM B-2378 / K5) protein is Polyribonucleotide nucleotidyltransferase.